We begin with the raw amino-acid sequence, 105 residues long: CRISPR-associated endoribonuclease Cas2 1 (105 aa).

Position 20 (Asp-20) interacts with Mg(2+).

The protein belongs to the CRISPR-associated endoribonuclease Cas2 protein family. As to quaternary structure, homodimer, forms a heterotetramer with a Cas1 homodimer. It depends on Mg(2+) as a cofactor.

Functionally, CRISPR (clustered regularly interspaced short palindromic repeat), is an adaptive immune system that provides protection against mobile genetic elements (viruses, transposable elements and conjugative plasmids). CRISPR clusters contain sequences complementary to antecedent mobile elements and target invading nucleic acids. CRISPR clusters are transcribed and processed into CRISPR RNA (crRNA). Functions as a ssRNA-specific endoribonuclease. Involved in the integration of spacer DNA into the CRISPR cassette. In Nitrosomonas europaea (strain ATCC 19718 / CIP 103999 / KCTC 2705 / NBRC 14298), this protein is CRISPR-associated endoribonuclease Cas2 1 (cas21).